Reading from the N-terminus, the 270-residue chain is 3-phenylpropionate-dihydrodiol/cinnamic acid-dihydrodiol dehydrogenase (270 aa).

10-34 (FITGGGSGLGLALVERFIEEGAQVA) provides a ligand contact to NAD(+). Serine 143 contributes to the substrate binding site. Catalysis depends on tyrosine 156, which acts as the Proton acceptor.

The protein belongs to the short-chain dehydrogenases/reductases (SDR) family.

It carries out the reaction 3-(cis-5,6-dihydroxycyclohexa-1,3-dien-1-yl)propanoate + NAD(+) = 3-(2,3-dihydroxyphenyl)propanoate + NADH + H(+). It catalyses the reaction (2E)-3-(cis-5,6-dihydroxycyclohexa-1,3-dien-1-yl)prop-2-enoate + NAD(+) = (2E)-3-(2,3-dihydroxyphenyl)prop-2-enoate + NADH + H(+). It functions in the pathway aromatic compound metabolism; 3-phenylpropanoate degradation. Its function is as follows. Converts 3-phenylpropionate-dihydrodiol (PP-dihydrodiol) and cinnamic acid-dihydrodiol (CI-dihydrodiol) into 3-(2,3-dihydroxylphenyl)propanoic acid (DHPP) and 2,3-dihydroxicinnamic acid (DHCI), respectively. This chain is 3-phenylpropionate-dihydrodiol/cinnamic acid-dihydrodiol dehydrogenase, found in Escherichia coli O17:K52:H18 (strain UMN026 / ExPEC).